The chain runs to 294 residues: Putative S-adenosyl-L-methionine-dependent methyltransferase RHA1_ro00605 (294 aa).

S-adenosyl-L-methionine is bound by residues Asp120 and 149–150 (DL).

It belongs to the UPF0677 family.

Functionally, exhibits S-adenosyl-L-methionine-dependent methyltransferase activity. In Rhodococcus jostii (strain RHA1), this protein is Putative S-adenosyl-L-methionine-dependent methyltransferase RHA1_ro00605.